A 202-amino-acid polypeptide reads, in one-letter code: Adenylyl-sulfate kinase (202 aa).

Residue 31 to 38 coordinates ATP; the sequence is GLSASGKS. The Phosphoserine intermediate role is filled by Ser-105.

This sequence belongs to the APS kinase family.

The catalysed reaction is adenosine 5'-phosphosulfate + ATP = 3'-phosphoadenylyl sulfate + ADP + H(+). The protein operates within sulfur metabolism; hydrogen sulfide biosynthesis; sulfite from sulfate: step 2/3. Functionally, catalyzes the synthesis of activated sulfate. The protein is Adenylyl-sulfate kinase (MET14) of Saccharomyces pastorianus (Lager yeast).